The sequence spans 223 residues: Ribosomal RNA small subunit methyltransferase G (223 aa).

S-adenosyl-L-methionine-binding positions include Gly82, Leu87, 133–134 (AE), and Arg151.

The protein belongs to the methyltransferase superfamily. RNA methyltransferase RsmG family.

It localises to the cytoplasm. Its function is as follows. Specifically methylates the N7 position of guanine in position 518 of 16S rRNA. This is Ribosomal RNA small subunit methyltransferase G from Corynebacterium glutamicum (strain ATCC 13032 / DSM 20300 / JCM 1318 / BCRC 11384 / CCUG 27702 / LMG 3730 / NBRC 12168 / NCIMB 10025 / NRRL B-2784 / 534).